The primary structure comprises 484 residues: Glycogen synthase (484 aa).

Lysine 15 provides a ligand contact to ADP-alpha-D-glucose.

It belongs to the glycosyltransferase 1 family. Bacterial/plant glycogen synthase subfamily.

It catalyses the reaction [(1-&gt;4)-alpha-D-glucosyl](n) + ADP-alpha-D-glucose = [(1-&gt;4)-alpha-D-glucosyl](n+1) + ADP + H(+). It functions in the pathway glycan biosynthesis; glycogen biosynthesis. Its function is as follows. Synthesizes alpha-1,4-glucan chains using ADP-glucose. The polypeptide is Glycogen synthase (Koribacter versatilis (strain Ellin345)).